The following is a 163-amino-acid chain: Probable ribosome biogenesis protein RLP24 (163 aa).

The protein belongs to the eukaryotic ribosomal protein eL24 family. In terms of assembly, associated with nucleolar and cytoplasmic pre-60S particles. At the end of biogenesis it dissociates from cytoplasmic pre-60S particles and is likely to be exchanged for its ribosomal homolog, RPL24.

Its subcellular location is the nucleus. It localises to the nucleolus. Functionally, involved in the biogenesis of the 60S ribosomal subunit. Ensures the docking of GTPBP4/NOG1 to pre-60S particles. The protein is Probable ribosome biogenesis protein RLP24 (Rsl24d1) of Rattus norvegicus (Rat).